A 396-amino-acid polypeptide reads, in one-letter code: Deoxyuridine 5'-triphosphate nucleotidohydrolase (396 aa).

Substrate-binding positions include 280–282 (RSS) and 380–381 (FG).

The protein belongs to the dUTPase family. Mg(2+) serves as cofactor.

The catalysed reaction is dUTP + H2O = dUMP + diphosphate + H(+). Involved in nucleotide metabolism: produces dUMP, the immediate precursor of thymidine nucleotides and decreases the intracellular concentration of dUTP to avoid uracil incorporation into viral DNA. This chain is Deoxyuridine 5'-triphosphate nucleotidohydrolase, found in Homo sapiens (Human).